A 116-amino-acid polypeptide reads, in one-letter code: Ribosome-binding factor A (116 aa).

It belongs to the RbfA family. In terms of assembly, monomer. Binds 30S ribosomal subunits, but not 50S ribosomal subunits or 70S ribosomes.

Its subcellular location is the cytoplasm. In terms of biological role, one of several proteins that assist in the late maturation steps of the functional core of the 30S ribosomal subunit. Associates with free 30S ribosomal subunits (but not with 30S subunits that are part of 70S ribosomes or polysomes). Required for efficient processing of 16S rRNA. May interact with the 5'-terminal helix region of 16S rRNA. The protein is Ribosome-binding factor A of Chlorobium phaeobacteroides (strain BS1).